An 85-amino-acid polypeptide reads, in one-letter code: Large ribosomal subunit protein bL27 (85 aa).

The interval 1 to 22 is disordered; sequence MAHKKGVGSTRNGRDSESKRLG.

This sequence belongs to the bacterial ribosomal protein bL27 family.

The chain is Large ribosomal subunit protein bL27 from Geobacter metallireducens (strain ATCC 53774 / DSM 7210 / GS-15).